The following is a 734-amino-acid chain: Photosystem I P700 chlorophyll a apoprotein A2 (734 aa).

The next 8 helical transmembrane spans lie at 46–69 (IFAS…FHVA), 135–158 (LYTG…FHLQ), 175–199 (LNHH…HVAI), 273–291 (IAHH…GHMY), 330–353 (LHFQ…QHMY), 369–395 (AALY…IFFI), 417–439 (AIIS…LYVH), and 517–535 (FLVH…LILV). Cys559 and Cys568 together coordinate [4Fe-4S] cluster. The next 2 helical transmembrane spans lie at 575–596 (AFYL…YWHW) and 643–665 (LSVW…MFLI). The chlorophyll a site is built by His654, Met662, and Tyr670. A phylloquinone-binding site is contributed by Trp671. A helical membrane pass occupies residues 707 to 727 (LVGLAHFSVGYIFTYAAFLIA).

This sequence belongs to the PsaA/PsaB family. In terms of assembly, the PsaA/B heterodimer binds the P700 chlorophyll special pair and subsequent electron acceptors. PSI consists of a core antenna complex that captures photons, and an electron transfer chain that converts photonic excitation into a charge separation. The eukaryotic PSI reaction center is composed of at least 11 subunits. It depends on P700 is a chlorophyll a/chlorophyll a' dimer, A0 is one or more chlorophyll a, A1 is one or both phylloquinones and FX is a shared 4Fe-4S iron-sulfur center. as a cofactor.

The protein localises to the plastid. It localises to the chloroplast thylakoid membrane. It catalyses the reaction reduced [plastocyanin] + hnu + oxidized [2Fe-2S]-[ferredoxin] = oxidized [plastocyanin] + reduced [2Fe-2S]-[ferredoxin]. PsaA and PsaB bind P700, the primary electron donor of photosystem I (PSI), as well as the electron acceptors A0, A1 and FX. PSI is a plastocyanin-ferredoxin oxidoreductase, converting photonic excitation into a charge separation, which transfers an electron from the donor P700 chlorophyll pair to the spectroscopically characterized acceptors A0, A1, FX, FA and FB in turn. Oxidized P700 is reduced on the lumenal side of the thylakoid membrane by plastocyanin. The sequence is that of Photosystem I P700 chlorophyll a apoprotein A2 from Jasminum nudiflorum (Winter jasmine).